A 355-amino-acid polypeptide reads, in one-letter code: Ribosomal RNA large subunit methyltransferase M (355 aa).

S-adenosyl-L-methionine is bound by residues serine 183, 216 to 219, aspartate 235, aspartate 255, and aspartate 271; that span reads SPGG. Lysine 300 (proton acceptor) is an active-site residue.

Belongs to the class I-like SAM-binding methyltransferase superfamily. RNA methyltransferase RlmE family. RlmM subfamily. As to quaternary structure, monomer.

It localises to the cytoplasm. The catalysed reaction is cytidine(2498) in 23S rRNA + S-adenosyl-L-methionine = 2'-O-methylcytidine(2498) in 23S rRNA + S-adenosyl-L-homocysteine + H(+). Catalyzes the 2'-O-methylation at nucleotide C2498 in 23S rRNA. The chain is Ribosomal RNA large subunit methyltransferase M from Pseudomonas putida (strain W619).